We begin with the raw amino-acid sequence, 24 residues long: Waglerin-3 (24 aa).

The segment covering 1–10 (SLGGKPDLRP) has biased composition (basic and acidic residues). Positions 1 to 24 (SLGGKPDLRPCHPPCHYIPRPKPR) are disordered. An intrachain disulfide couples Cys11 to Cys15.

It belongs to the waglerin family. As to quaternary structure, waglerin-1 is monomeric. Amidation of the waglerin-1 C-terminus increases the affinity by 2-fold. Expressed by the venom gland.

The protein resides in the secreted. Functionally, waglerin-1 selectively blocks the epsilon subunit of muscle nicotinic acetylcholine receptor (nAChR). Also has effects on rodent ionotropic GABA(A) receptors (GABR), since it potentiates I(GABA) in some neurons and depresses I(GABA) in others. In mice, it elicits tachypnea, ocular proptosis, rapid collapse and spasms, whereas no toxic effects on respiration and blood pressure are observed in rats. Waglerin-3 selectively blocks the epsilon subunit of muscle nicotinic acetylcholine receptor (nAChR). It elicits tachypnea, ocular proptosis, rapid collapse and spasms in mice. It causes death by respiratory failure. The protein is Waglerin-3 of Tropidolaemus wagleri (Wagler's pit viper).